Here is a 115-residue protein sequence, read N- to C-terminus: MKLCVIIIASLMVASVSGRLRKIKGTELDKKMLLEKLGHGMDIRFEETPRECSKKAGEKCESNCDCCGYSTLCGYITEGKEVKYQCMSKTSNNEILNTIGLGMNAIENMFSFCFR.

The first 18 residues, 1-18 (MKLCVIIIASLMVASVSG), serve as a signal peptide directing secretion. The propeptide occupies 19-51 (RLRKIKGTELDKKMLLEKLGHGMDIRFEETPRE). 4 cysteine pairs are disulfide-bonded: cysteine 52/cysteine 67, cysteine 60/cysteine 73, cysteine 64/cysteine 113, and cysteine 66/cysteine 86.

The protein belongs to the neurotoxin 03 (Tx2) family. 02 subfamily. Expressed by the venom gland.

It is found in the secreted. Functionally, probable ion channel inhibitor. The sequence is that of U31-theraphotoxin-Cg1b from Chilobrachys guangxiensis (Chinese earth tiger tarantula).